The sequence spans 266 residues: Undecaprenyl-diphosphatase (266 aa).

8 helical membrane-spanning segments follow: residues 4-24, 46-66, 82-102, 105-125, 142-162, 182-202, 216-236, and 244-264; these read WLIA…PVSS, VLIQ…RLWG, IGIL…HDFI, VLYE…FILL, YPLK…VPGV, AAEF…AYDL, LIGI…KTVL, and FAPF…LLYI.

It belongs to the UppP family.

The protein resides in the cell inner membrane. The catalysed reaction is di-trans,octa-cis-undecaprenyl diphosphate + H2O = di-trans,octa-cis-undecaprenyl phosphate + phosphate + H(+). Its function is as follows. Catalyzes the dephosphorylation of undecaprenyl diphosphate (UPP). Confers resistance to bacitracin. The protein is Undecaprenyl-diphosphatase of Caulobacter vibrioides (strain ATCC 19089 / CIP 103742 / CB 15) (Caulobacter crescentus).